Consider the following 793-residue polypeptide: Putative glutamate--cysteine ligase 2-3 (793 aa).

The tract at residues 1–407 (MLASDPRKVG…RFWDRGDTAD (407 aa)) is carboxylate-amine ligase. The tract at residues 367 to 390 (TEHLPDVEVPPPREPGPKSTGAGR) is disordered. The peptidase M20 stretch occupies residues 408-793 (MTWTESTELD…ALTRLEDQSG (386 aa)).

In the C-terminal section; belongs to the glutamate--cysteine ligase type 2 family. YbdK subfamily.

The catalysed reaction is L-cysteine + L-glutamate + ATP = gamma-L-glutamyl-L-cysteine + ADP + phosphate + H(+). ATP-dependent carboxylate-amine ligase which exhibits weak glutamate--cysteine ligase activity. This is Putative glutamate--cysteine ligase 2-3 from Rhodococcus jostii (strain RHA1).